The chain runs to 206 residues: Alpha-1-acid glycoprotein 3 (206 aa).

A signal peptide spans 1–18 (MELHTVLIMLSLLPLLEA). N-linked (GlcNAc...) asparagine glycosylation is found at N33, N75, and N103. The cysteines at positions 90 and 183 are disulfide-linked. Positions 187-206 (EKKHLELEKETKKDPEESQA) are disordered.

Belongs to the calycin superfamily. Lipocalin family.

It localises to the secreted. Functionally, functions as a transport protein in the blood stream. Binds various ligands in the interior of its beta-barrel domain. Appears to function in modulating the activity of the immune system during the acute-phase reaction. The sequence is that of Alpha-1-acid glycoprotein 3 (Orm3) from Mus musculus (Mouse).